The sequence spans 247 residues: Germin-like protein 9-1 (247 aa).

An N-terminal signal peptide occupies residues 1 to 25 (MMMSSRSSVSLGVLLLLAVILSAGA). Positions 53-201 (KNLVTGNSGD…SMHTDQATVD (149 aa)) constitute a Cupin type-1 domain. Positions 100, 102, and 107 each coordinate Mn(2+). Residue Asn-126 is glycosylated (N-linked (GlcNAc...) asparagine). His-148 is a binding site for Mn(2+). An N-linked (GlcNAc...) asparagine glycan is attached at Asn-153.

The protein belongs to the germin family. Oligomer (believed to be a pentamer but probably hexamer).

Its subcellular location is the secreted. It localises to the extracellular space. It is found in the apoplast. In terms of biological role, may play a role in plant defense. Probably has no oxalate oxidase activity even if the active site is conserved. The protein is Germin-like protein 9-1 of Oryza sativa subsp. japonica (Rice).